The following is a 255-amino-acid chain: Taurine import ATP-binding protein TauB (255 aa).

The 228-residue stretch at 2 to 229 (LQISHLYADY…RFVAGESSRS (228 aa)) folds into the ABC transporter domain. An ATP-binding site is contributed by 34-41 (GPSGCGKT).

This sequence belongs to the ABC transporter superfamily. Taurine importer (TC 3.A.1.17.1) family. The complex is composed of two ATP-binding proteins (TauB), two transmembrane proteins (TauC) and a solute-binding protein (TauA).

The protein resides in the cell inner membrane. It carries out the reaction taurine(out) + ATP + H2O = taurine(in) + ADP + phosphate + H(+). Part of the ABC transporter complex TauABC involved in taurine import. Responsible for energy coupling to the transport system. The chain is Taurine import ATP-binding protein TauB from Escherichia coli O6:K15:H31 (strain 536 / UPEC).